Consider the following 1026-residue polypeptide: Adenylate-forming reductase 06235 (1026 aa).

Positions 37–422 (FEFHAKANPD…LGRIDNQVKI (386 aa)) are adenylation (A) domain. Residues 332–333 (VT) and 412–415 (HLGR) each bind AMP. Positions 556 to 638 (SLVSTVGSTV…ALFIWILVTK (83 aa)) are thiolation and peptide carrier (T) domain. The interval 682 to 901 (CIRRVCARIY…PPTKMWVKGV (220 aa)) is reductase (R) domain. NADP(+)-binding positions include 685–688 (RVCA), 769–771 (TAL), and Tyr-840.

It belongs to the adenylate-forming reductase family.

Its function is as follows. Adenylate-forming reductase, a natural product biosynthesis enzyme that resembles non-ribosomal peptide synthetases, yet serves to modify one substrate, rather than to condense two or more building blocks. The A-domain preferentially accepts L-serine, L-alanine and L-valine as substrates. The natural product of the enzyme is not yet known. The protein is Adenylate-forming reductase 06235 of Coprinopsis cinerea (strain Okayama-7 / 130 / ATCC MYA-4618 / FGSC 9003) (Inky cap fungus).